Consider the following 355-residue polypeptide: Natterin-1 (355 aa).

A signal peptide spans Met1–Ala18. Positions Glu19 to Ala27 are excised as a propeptide.

The protein belongs to the natterin family. Post-translationally, contains 4 disulfide bonds. As to expression, expressed by the venom gland.

Its subcellular location is the secreted. With respect to regulation, inhibited by tissue-kallikrein inhibitor TKI and trasylol. Plasma kallikrein inhibitor PKSI527 and classical inhibitors of serine-, metallo-, thiol- or aspartate-peptidases evokes a minor inhibition of the peptide digestion. Its function is as follows. Shows nociceptive, edema-inducing and kininogenase activity with release of kallidin from low molecular weight kininogen. The cleavage occurs at Met-Lys bonds. The chain is Natterin-1 from Thalassophryne nattereri (Copper Joe toadfish).